A 73-amino-acid chain; its full sequence is Large ribosomal subunit protein uL29 (73 aa).

Belongs to the universal ribosomal protein uL29 family.

This Aquifex aeolicus (strain VF5) protein is Large ribosomal subunit protein uL29 (rpmC).